The primary structure comprises 185 residues: Elongation factor P (185 aa).

This sequence belongs to the elongation factor P family.

It is found in the cytoplasm. It participates in protein biosynthesis; polypeptide chain elongation. Functionally, involved in peptide bond synthesis. Stimulates efficient translation and peptide-bond synthesis on native or reconstituted 70S ribosomes in vitro. Probably functions indirectly by altering the affinity of the ribosome for aminoacyl-tRNA, thus increasing their reactivity as acceptors for peptidyl transferase. This is Elongation factor P from Bacillus cytotoxicus (strain DSM 22905 / CIP 110041 / 391-98 / NVH 391-98).